The primary structure comprises 174 residues: DNA replication inhibitor plutonium (174 aa).

ANK repeat units follow at residues 39–68 (YGNT…NIFA) and 72–103 (FGQN…DFNL). Thr167 is subject to Phosphothreonine.

Functionally, inhibits DNA replication early in developments. May bind and block the action of a replication or initiation factor. The protein is DNA replication inhibitor plutonium (plu) of Drosophila melanogaster (Fruit fly).